The following is a 24-amino-acid chain: U4-ctenitoxin-Co1b (24 aa).

In terms of processing, disulfide bonds are present. Expressed by the venom gland.

It localises to the secreted. In terms of biological role, omega-agatoxins are antagonists of voltage-gated calcium channels (Cav). This is U4-ctenitoxin-Co1b from Ctenus ornatus (Brazilian spider).